The primary structure comprises 277 residues: Exosome complex component Rrp42 (277 aa).

The protein belongs to the RNase PH family. Rrp42 subfamily. As to quaternary structure, component of the archaeal exosome complex. Forms a hexameric ring-like arrangement composed of 3 Rrp41-Rrp42 heterodimers. The hexameric ring associates with a trimer of Rrp4 and/or Csl4 subunits.

The protein localises to the cytoplasm. Its function is as follows. Non-catalytic component of the exosome, which is a complex involved in RNA degradation. Contributes to the structuring of the Rrp41 active site. The polypeptide is Exosome complex component Rrp42 (Pyrococcus furiosus (strain ATCC 43587 / DSM 3638 / JCM 8422 / Vc1)).